The primary structure comprises 206 residues: Alpha-amylase/trypsin inhibitor (206 aa).

8 disulfides stabilise this stretch: cysteine 9-cysteine 205, cysteine 51-cysteine 61, cysteine 66-cysteine 72, cysteine 118-cysteine 194, cysteine 124-cysteine 177, cysteine 132-cysteine 142, cysteine 146-cysteine 155, and cysteine 156-cysteine 164.

It belongs to the thaumatin family.

Functionally, inhibits both trypsin and alpha-amylase. Inhibits the growth of some plant fungal pathogens. In Zea mays (Maize), this protein is Alpha-amylase/trypsin inhibitor.